Consider the following 153-residue polypeptide: Ribosome maturation factor RimP (153 aa).

Belongs to the RimP family.

The protein resides in the cytoplasm. In terms of biological role, required for maturation of 30S ribosomal subunits. The protein is Ribosome maturation factor RimP of Clostridium tetani (strain Massachusetts / E88).